We begin with the raw amino-acid sequence, 1362 residues long: DNA-directed RNA polymerase subunit beta (1362 aa).

It belongs to the RNA polymerase beta chain family. As to quaternary structure, the RNAP catalytic core consists of 2 alpha, 1 beta, 1 beta' and 1 omega subunit. When a sigma factor is associated with the core the holoenzyme is formed, which can initiate transcription.

It carries out the reaction RNA(n) + a ribonucleoside 5'-triphosphate = RNA(n+1) + diphosphate. In terms of biological role, DNA-dependent RNA polymerase catalyzes the transcription of DNA into RNA using the four ribonucleoside triphosphates as substrates. This is DNA-directed RNA polymerase subunit beta from Parvibaculum lavamentivorans (strain DS-1 / DSM 13023 / NCIMB 13966).